The primary structure comprises 186 residues: Iodotyrosine deiodinase (186 aa).

Residues 11–15, 38–39, and S39 contribute to the FMN site; these read RKTVR and PS. 3-iodo-L-tyrosine contacts are provided by M41, E68, Y72, and K92. Residues M41, E68, Y72, and K92 each contribute to the L-tyrosine site. Residue R176 participates in FMN binding.

The protein belongs to the nitroreductase family. Homodimer. It depends on FMN as a cofactor.

It catalyses the reaction 2 iodide + L-tyrosine + 2 NADP(+) = 3,5-diiodo-L-tyrosine + 2 NADPH + H(+). It carries out the reaction iodide + L-tyrosine + NADP(+) = 3-iodo-L-tyrosine + NADPH. The catalysed reaction is 3-iodo-L-tyrosine + iodide + NADP(+) = 3,5-diiodo-L-tyrosine + NADPH + H(+). The enzyme catalyses L-tyrosine + chloride + NADP(+) = 3-chloro-L-tyrosine + NADPH. It catalyses the reaction bromide + L-tyrosine + NADP(+) = 3-bromo-L-tyrosine + NADPH. In terms of biological role, catalyzes the dehalogenation of halotyrosines such as 3-bromo-L-tyrosine, 3-chloro-L-tyrosine, 3-iodo-L-tyrosine and 3,5-diiodo-L-tyrosine. Activity towards 2-iodophenol is weak. The polypeptide is Iodotyrosine deiodinase (Thermotoga neapolitana (strain ATCC 49049 / DSM 4359 / NBRC 107923 / NS-E)).